Consider the following 299-residue polypeptide: Protoheme IX farnesyltransferase (299 aa).

Helical transmembrane passes span 25 to 45, 47 to 67, 95 to 115, 119 to 139, 147 to 167, 173 to 193, 218 to 238, 243 to 263, and 279 to 299; these read VVLLMLITSLVGMFLATRAGV, WTVLLFGNLGIGLCAGAAAAV, AAAIAFALLLATAGMGLLLLF, LAAWLTLASLLGYAVIYTGFL, IVIGGLAGAAPPLLGWVAVTG, PLLLVLIIFAWTPPHFWALAI, VHILLYTLVMFAVTLLPYAIH, LYLVCALLLGARFLHWAWVLY, and IWYLFLLFIALLADHYLLLNI.

Belongs to the UbiA prenyltransferase family. Protoheme IX farnesyltransferase subfamily.

It localises to the cell inner membrane. The catalysed reaction is heme b + (2E,6E)-farnesyl diphosphate + H2O = Fe(II)-heme o + diphosphate. The protein operates within porphyrin-containing compound metabolism; heme O biosynthesis; heme O from protoheme: step 1/1. Its function is as follows. Converts heme B (protoheme IX) to heme O by substitution of the vinyl group on carbon 2 of heme B porphyrin ring with a hydroxyethyl farnesyl side group. In Ectopseudomonas mendocina (strain ymp) (Pseudomonas mendocina), this protein is Protoheme IX farnesyltransferase.